The chain runs to 218 residues: UPF0711 protein C18orf21 homolog (218 aa).

S126 is modified (phosphoserine). A compositionally biased stretch (low complexity) spans 130–146 (ASAASKASPKTPKRAAA). The segment at 130 to 192 (ASAASKASPK…NGSKRKKHFS (63 aa)) is disordered. Residue T140 is modified to Phosphothreonine. Polar residues predominate over residues 147-156 (GSTNISQSVH). Residues 161–172 (RSPSSTVRTPTS) are compositionally biased toward low complexity. Polar residues predominate over residues 173-183 (GQSTPICSSRN).

This sequence belongs to the UPF0711 family.

This Rattus norvegicus (Rat) protein is UPF0711 protein C18orf21 homolog.